Reading from the N-terminus, the 378-residue chain is Dihydroorotate dehydrogenase (quinone) (378 aa).

Residues 77–81 (AGFDK) and Thr101 contribute to the FMN site. Lys81 serves as a coordination point for substrate. 126 to 130 (NRMGF) lines the substrate pocket. FMN contacts are provided by Asn158 and Asn191. Asn191 is a substrate binding site. The active-site Nucleophile is the Ser194. Substrate is bound at residue Asn196. FMN is bound by residues Lys229 and Thr257. A substrate-binding site is contributed by 258–259 (NT). FMN-binding positions include Gly287, Gly316, and 337-338 (YT).

This sequence belongs to the dihydroorotate dehydrogenase family. Type 2 subfamily. Monomer. Requires FMN as cofactor.

It localises to the cell membrane. The catalysed reaction is (S)-dihydroorotate + a quinone = orotate + a quinol. It participates in pyrimidine metabolism; UMP biosynthesis via de novo pathway; orotate from (S)-dihydroorotate (quinone route): step 1/1. Catalyzes the conversion of dihydroorotate to orotate with quinone as electron acceptor. The sequence is that of Dihydroorotate dehydrogenase (quinone) from Synechococcus elongatus (strain ATCC 33912 / PCC 7942 / FACHB-805) (Anacystis nidulans R2).